Consider the following 27-residue polypeptide: uncharacterized protein (27 aa).

The protein localises to the mitochondrion. This is an uncharacterized protein from Emericella nidulans (Aspergillus nidulans).